Reading from the N-terminus, the 270-residue chain is Acyl-[acyl-carrier-protein]--UDP-N-acetylglucosamine O-acyltransferase (270 aa).

Belongs to the transferase hexapeptide repeat family. LpxA subfamily. In terms of assembly, homotrimer.

Its subcellular location is the cytoplasm. It carries out the reaction a (3R)-hydroxyacyl-[ACP] + UDP-N-acetyl-alpha-D-glucosamine = a UDP-3-O-[(3R)-3-hydroxyacyl]-N-acetyl-alpha-D-glucosamine + holo-[ACP]. Its pathway is glycolipid biosynthesis; lipid IV(A) biosynthesis; lipid IV(A) from (3R)-3-hydroxytetradecanoyl-[acyl-carrier-protein] and UDP-N-acetyl-alpha-D-glucosamine: step 1/6. Its function is as follows. Involved in the biosynthesis of lipid A, a phosphorylated glycolipid that anchors the lipopolysaccharide to the outer membrane of the cell. This is Acyl-[acyl-carrier-protein]--UDP-N-acetylglucosamine O-acyltransferase from Helicobacter pylori (strain J99 / ATCC 700824) (Campylobacter pylori J99).